We begin with the raw amino-acid sequence, 365 residues long: 3-dehydroquinate synthase (365 aa).

Residues 106–110 (GVIGD), 130–131 (TT), lysine 142, lysine 151, and 169–172 (FFAT) contribute to the NAD(+) site. Positions 184, 247, and 264 each coordinate Zn(2+).

The protein belongs to the sugar phosphate cyclases superfamily. Dehydroquinate synthase family. Requires Co(2+) as cofactor. Zn(2+) serves as cofactor. It depends on NAD(+) as a cofactor.

It is found in the cytoplasm. It carries out the reaction 7-phospho-2-dehydro-3-deoxy-D-arabino-heptonate = 3-dehydroquinate + phosphate. The protein operates within metabolic intermediate biosynthesis; chorismate biosynthesis; chorismate from D-erythrose 4-phosphate and phosphoenolpyruvate: step 2/7. Its function is as follows. Catalyzes the conversion of 3-deoxy-D-arabino-heptulosonate 7-phosphate (DAHP) to dehydroquinate (DHQ). This is 3-dehydroquinate synthase from Listeria monocytogenes serotype 4b (strain CLIP80459).